Reading from the N-terminus, the 166-residue chain is Small ribosomal subunit protein uS5 (166 aa).

One can recognise an S5 DRBM domain in the interval 11-74 (LQEKLISVNR…DKARKNMIII (64 aa)).

This sequence belongs to the universal ribosomal protein uS5 family. In terms of assembly, part of the 30S ribosomal subunit. Contacts proteins S4 and S8.

Its function is as follows. With S4 and S12 plays an important role in translational accuracy. Functionally, located at the back of the 30S subunit body where it stabilizes the conformation of the head with respect to the body. This Wigglesworthia glossinidia brevipalpis protein is Small ribosomal subunit protein uS5.